The sequence spans 98 residues: NADH-ubiquinone oxidoreductase chain 4L (98 aa).

3 consecutive transmembrane segments (helical) span residues 1–21, 28–48, and 61–81; these read MEQI…GVLT, STLL…VLLI, and LILL…LVTI.

The protein belongs to the complex I subunit 4L family. In terms of assembly, core subunit of respiratory chain NADH dehydrogenase (Complex I) which is composed of 45 different subunits.

Its subcellular location is the mitochondrion inner membrane. It catalyses the reaction a ubiquinone + NADH + 5 H(+)(in) = a ubiquinol + NAD(+) + 4 H(+)(out). Functionally, core subunit of the mitochondrial membrane respiratory chain NADH dehydrogenase (Complex I) which catalyzes electron transfer from NADH through the respiratory chain, using ubiquinone as an electron acceptor. Part of the enzyme membrane arm which is embedded in the lipid bilayer and involved in proton translocation. The polypeptide is NADH-ubiquinone oxidoreductase chain 4L (MT-ND4L) (Monodelphis domestica (Gray short-tailed opossum)).